Here is a 426-residue protein sequence, read N- to C-terminus: Zinc finger protein 662 (426 aa).

One can recognise a KRAB domain in the interval 1–44 (MLENYGAVASLAAFPFPKPALISQLERGETPWCSVPRGALDGEA). 8 C2H2-type zinc fingers span residues 192-214 (YICEECGKCFDQNEDFDQHQKTH), 220-242 (YGCKECGKAFSFRSHCIAHQRIH), 248-270 (YECQECAKAFVWKSNLIRHQRIH), 276-298 (FECKECGKGFSQNTSLTQHQRIH), 304-326 (YTCKECGKSFTRNPALLRHQRMH), 332-354 (YECKDCGKGFMWNSDLSQHQRVH), 360-382 (HECTDCGKSFFCKAHLIRHQRIH), and 388-410 (YKCNDCGKAFSQNSVLIKHQRRH).

It belongs to the krueppel C2H2-type zinc-finger protein family.

The protein localises to the nucleus. Functionally, may be involved in transcriptional regulation. This chain is Zinc finger protein 662 (ZNF662), found in Homo sapiens (Human).